The sequence spans 302 residues: Dioxygenase ALT11 (302 aa).

A disordered region spans residues 1 to 22 (MSSPELPSQMGVPNGHTKLQEV). Fe cation contacts are provided by H147, D149, and H223.

It belongs to the PhyH family. Homodimer. Fe cation is required as a cofactor.

The protein operates within mycotoxin biosynthesis. Dioxygenase; part of the gene cluster that mediates the biosynthesis of the host-selective toxins (HSTs) AAL-toxins, sphinganine-analog mycotoxins responsible for Alternaria stem canker on tomato by the tomato pathotype. The biosynthesis starts with the polyketide synthase ALT1-catalyzed C-16 carbon chain assembly from one starter acetyl-CoA unit with malonyl-CoA extender units. ALT1 also selectively transfers methyl groups at the first and the third cycle of chain elongation for AAL toxin. The C-16 polyketide chain is released from the enzyme by a nucleophilic attack of a carbanion, which is derived from R-carbon of glycin by decarboxylation, on the carbonyl carbon of polyketide acyl chain. This step is probably catalyzed by a pyridoxal 5'-phosphate-dependent aminoacyl transferase ALT4. The respective functions of the other enzymes encoded by the cluster have still to be elucidated. The sphingosine N-acyltransferase-like protein ALT7 seems not to act as a resistance/self-tolerance factor against the toxin in the toxin biosynthetic gene cluster, contrary to what is expected. The polypeptide is Dioxygenase ALT11 (Alternaria alternata (Alternaria rot fungus)).